The sequence spans 217 residues: IMPACT family member YvyE (217 aa).

This sequence belongs to the IMPACT family.

In Bacillus subtilis (strain 168), this protein is IMPACT family member YvyE (yvyE).